Consider the following 320-residue polypeptide: Cytochrome c biogenesis protein CcsA (320 aa).

The next 8 membrane-spanning stretches (helical) occupy residues 9 to 29 (ILIH…FLTL), 44 to 64 (GMIV…IYSG), 71 to 91 (LYES…VCYF), 99 to 119 (LNAI…SGLL), 144 to 164 (MVLG…LLVI), 226 to 246 (IISL…VWAN), 261 to 281 (WAFI…NINL), and 287 to 307 (AIVA…VNLL).

It belongs to the CcmF/CycK/Ccl1/NrfE/CcsA family. May interact with Ccs1.

The protein localises to the plastid. The protein resides in the chloroplast thylakoid membrane. Required during biogenesis of c-type cytochromes (cytochrome c6 and cytochrome f) at the step of heme attachment. This Carica papaya (Papaya) protein is Cytochrome c biogenesis protein CcsA.